The sequence spans 367 residues: tRNA-specific 2-thiouridylase MnmA (367 aa).

ATP contacts are provided by residues 6–13 (AMSGGVDS) and methionine 32. Cysteine 101 (nucleophile) is an active-site residue. A disulfide bond links cysteine 101 and cysteine 193. Glycine 125 serves as a coordination point for ATP. The segment at 143-145 (KDQ) is interaction with tRNA. The active-site Cysteine persulfide intermediate is the cysteine 193.

The protein belongs to the MnmA/TRMU family.

It is found in the cytoplasm. It carries out the reaction S-sulfanyl-L-cysteinyl-[protein] + uridine(34) in tRNA + AH2 + ATP = 2-thiouridine(34) in tRNA + L-cysteinyl-[protein] + A + AMP + diphosphate + H(+). Catalyzes the 2-thiolation of uridine at the wobble position (U34) of tRNA, leading to the formation of s(2)U34. The chain is tRNA-specific 2-thiouridylase MnmA from Mycobacterium tuberculosis (strain CDC 1551 / Oshkosh).